The sequence spans 242 residues: uncharacterized protein (242 aa).

This is an uncharacterized protein from Aquifex aeolicus (strain VF5).